A 620-amino-acid chain; its full sequence is Siderophore iron transporter ARN2 (620 aa).

A disordered region spans residues 1–42 (MIEVPEDNRSSQTKRKNTEKNCNELMVDEKMDDDSSPRDEMK). A compositionally biased stretch (basic and acidic residues) spans 16–42 (KNTEKNCNELMVDEKMDDDSSPRDEMK). Transmembrane regions (helical) follow at residues 71-93 (IFLFSAFICTFAYGLDSSIRGTY), 106-128 (LISTVSVIVLMISAVSQVIFGGL), 135-152 (LTLFLVSIVLYIVGTIIQ), 162-184 (AAGAVFYYVGLVGVMLQVVLMLS), 191-213 (WRLFYTLIPSWPSIITTWVSGSV), 223-245 (WSWNIAMWAFIFPLCCIPLILCM), 286-308 (VVGVLLFTAGVGCILVPLTLAGG), 318-335 (IIGPFVLGFVLVPGFIYW), 355-377 (VWAPLGIMFFICFVYQMAAGYLY), 392-414 (TRIINLYSFVTAVVAPFLGLIVT), 421-438 (SYIIFGGSLYFITMGLFY), 448-470 (GGIIAGMVIWGLSSCLFDYPTIV), 491-513 (VFRIGGAVAAAISGAIWTQSLYP), and 561-578 (VIVALVFSAPMFLLTFCV).

This sequence belongs to the major facilitator superfamily.

It localises to the endosome membrane. Functionally, involved in the transport of siderophore triacestylfusarinine C and so has a role in iron homeostasis. This Saccharomyces cerevisiae (strain ATCC 204508 / S288c) (Baker's yeast) protein is Siderophore iron transporter ARN2 (ARN2).